A 184-amino-acid chain; its full sequence is Photosystem I assembly protein Ycf4 (184 aa).

2 helical membrane-spanning segments follow: residues Asn-21–Tyr-43 and Leu-58–Ser-78.

Belongs to the Ycf4 family.

The protein resides in the plastid. The protein localises to the chloroplast thylakoid membrane. In terms of biological role, seems to be required for the assembly of the photosystem I complex. This Pinus thunbergii (Japanese black pine) protein is Photosystem I assembly protein Ycf4.